Consider the following 84-residue polypeptide: uncharacterized protein (84 aa).

3 helical membrane-spanning segments follow: residues 4-20 (AYVLVSGFMLVLGIKYG), 27-49 (VWKAGLIILAGFAVIFAAAWIAF), and 59-81 (IGLAKSLSVVMGLIAGVLSVYVL).

It localises to the cell membrane. This is an uncharacterized protein from Archaeoglobus fulgidus (strain ATCC 49558 / DSM 4304 / JCM 9628 / NBRC 100126 / VC-16).